The primary structure comprises 27 residues: VIGGAECNINEHRSLVLLYXSSSXFGE.

A Peptidase S1 domain is found at 1 to 27 (VIGGAECNINEHRSLVLLYXSSSXFGE).

It belongs to the peptidase S1 family. Snake venom subfamily. In terms of assembly, heterodimer of an alpha and a beta chain. Subunit beta is constituted of two disulfide-linked polypeptidic chains, beta and beta'. Calcium appears to be required for structural cohesion of the molecule. Post-translationally, both chains alpha and beta are N-glycosylated. In terms of tissue distribution, expressed by the venom gland.

It localises to the secreted. Inhibited by diisopropylfluorophosphate (DFP), benzamidine, heparin and hirudin, but not by plasmatic thrombin inhibitors, antithrombin-III and ecotin. Functionally, snake venom serine protease that exhibits alpha-fibrinase and beta-fibrinogenase activities. It replaces missing factors VIII (F8) and IX (F9) in deficient plasmas by activating purified human factor X (F10) into factor Xa. It releases serotonin from platelets and induces platelet aggregation in human (but not in rabbit). Has caseinolytic, arginine-esterase and amidase activities. The sequence is that of Snake venom serine protease Afaacytin alpha/beta/beta' chains from Cerastes cerastes (Horned desert viper).